Reading from the N-terminus, the 301-residue chain is Probable aspartoacylase (301 aa).

Residues His13 and Glu16 each contribute to the Zn(2+) site. Residues Arg54 and 61 to 62 (NR) contribute to the substrate site. His105 contacts Zn(2+). Substrate is bound by residues Glu163 and Tyr273.

Belongs to the AspA/AstE family. Aspartoacylase subfamily. It depends on Zn(2+) as a cofactor.

The enzyme catalyses an N-acyl-L-aspartate + H2O = a carboxylate + L-aspartate. This Prochlorococcus marinus (strain MIT 9301) protein is Probable aspartoacylase.